The following is a 425-amino-acid chain: Glutamate-1-semialdehyde 2,1-aminomutase (425 aa).

K266 bears the N6-(pyridoxal phosphate)lysine mark.

Belongs to the class-III pyridoxal-phosphate-dependent aminotransferase family. HemL subfamily. In terms of assembly, homodimer. The cofactor is pyridoxal 5'-phosphate.

Its subcellular location is the cytoplasm. It catalyses the reaction (S)-4-amino-5-oxopentanoate = 5-aminolevulinate. The protein operates within porphyrin-containing compound metabolism; protoporphyrin-IX biosynthesis; 5-aminolevulinate from L-glutamyl-tRNA(Glu): step 2/2. In Nitratidesulfovibrio vulgaris (strain DSM 19637 / Miyazaki F) (Desulfovibrio vulgaris), this protein is Glutamate-1-semialdehyde 2,1-aminomutase.